A 402-amino-acid polypeptide reads, in one-letter code: UDP-N-acetylmuramoylalanine--D-glutamate ligase (402 aa).

97-103 (GTNGKTT) is an ATP binding site.

It belongs to the MurCDEF family.

It is found in the cytoplasm. It carries out the reaction UDP-N-acetyl-alpha-D-muramoyl-L-alanine + D-glutamate + ATP = UDP-N-acetyl-alpha-D-muramoyl-L-alanyl-D-glutamate + ADP + phosphate + H(+). It participates in cell wall biogenesis; peptidoglycan biosynthesis. Cell wall formation. Catalyzes the addition of glutamate to the nucleotide precursor UDP-N-acetylmuramoyl-L-alanine (UMA). The sequence is that of UDP-N-acetylmuramoylalanine--D-glutamate ligase from Campylobacter jejuni (strain RM1221).